The primary structure comprises 233 residues: Homeobox protein EMX1 (233 aa).

The segment at residues 135 to 194 (PKRIRTAFSPSQLLRLERAFEKNHYVVGAERKQLASSLSLSETQVKVWFQNRRTKYKRQK) is a DNA-binding region (homeobox). The segment at 192-233 (RQKLEEEGPDSDQKKKGSHHINRWRLATKQPNGEDIDVTSND) is disordered. The span at 193-206 (QKLEEEGPDSDQKK) shows a compositional bias: basic and acidic residues.

Belongs to the EMX homeobox family.

The protein resides in the nucleus. In terms of biological role, may function in combinations with OTX1/2 to specify cell fates in the developing central nervous system. This is Homeobox protein EMX1 (emx1) from Xenopus tropicalis (Western clawed frog).